A 500-amino-acid chain; its full sequence is ATP synthase subunit alpha (500 aa).

Position 169–176 (169–176 (GDRQTGKT)) interacts with ATP.

This sequence belongs to the ATPase alpha/beta chains family. In terms of assembly, F-type ATPases have 2 components, CF(1) - the catalytic core - and CF(0) - the membrane proton channel. CF(1) has five subunits: alpha(3), beta(3), gamma(1), delta(1), epsilon(1). CF(0) has three main subunits: a(1), b(2) and c(9-12). The alpha and beta chains form an alternating ring which encloses part of the gamma chain. CF(1) is attached to CF(0) by a central stalk formed by the gamma and epsilon chains, while a peripheral stalk is formed by the delta and b chains.

Its subcellular location is the cell membrane. It carries out the reaction ATP + H2O + 4 H(+)(in) = ADP + phosphate + 5 H(+)(out). Its function is as follows. Produces ATP from ADP in the presence of a proton gradient across the membrane. The alpha chain is a regulatory subunit. The polypeptide is ATP synthase subunit alpha (Lactococcus lactis subsp. cremoris (strain SK11)).